The chain runs to 1742 residues: Unconventional myosin-Vc (1742 aa).

At Ala-2 the chain carries N-acetylalanine. In terms of domain architecture, Myosin N-terminal SH3-like spans 8 to 62; sequence TQYNRVWIPDPEEVWKSAEIAKDYRVGDKVLRLLLEDGTELDYSVNPESLPPLRN. In terms of domain architecture, Myosin motor spans 67 to 753; it reads VGENDLTALS…QVAYLEKLRL (687 aa). 161-168 contributes to the ATP binding site; that stretch reads GESGAGKT. Residues 632-654 form an actin-binding region; the sequence is LYLLMETLNATTPHYVRCIKPND. 5 consecutive IQ domains span residues 756–779, 780–806, 807–829, 830–854, and 855–884; these read LRQS…FLRE, RRAA…VALK, EAWA…LYQL, IRMA…RKML, and EEHK…FVLN. Residues 884–1351 are a coiled coil; sequence NIQLTYRVQR…SKTIGKANDV (468 aa). Residues 1421-1697 enclose the Dilute domain; sequence NSTINGIKQV…VRKVQALLNS (277 aa).

Belongs to the TRAFAC class myosin-kinesin ATPase superfamily. Myosin family. As to expression, expressed chiefly in non-neuronal tissues. Particularly abundant in epithelial and glandular tissues including pancreas, prostate, mammary, stomach, colon and lung.

Functionally, may be involved in transferrin trafficking. Likely to power actin-based membrane trafficking in many physiologically crucial tissues. The chain is Unconventional myosin-Vc (MYO5C) from Homo sapiens (Human).